Reading from the N-terminus, the 203-residue chain is Ribosomal RNA large subunit methyltransferase E (203 aa).

S-adenosyl-L-methionine contacts are provided by Gly51, Trp53, Asp69, Asp85, and Asp108. Lys148 serves as the catalytic Proton acceptor.

The protein belongs to the class I-like SAM-binding methyltransferase superfamily. RNA methyltransferase RlmE family.

The protein localises to the cytoplasm. It carries out the reaction uridine(2552) in 23S rRNA + S-adenosyl-L-methionine = 2'-O-methyluridine(2552) in 23S rRNA + S-adenosyl-L-homocysteine + H(+). In terms of biological role, specifically methylates the uridine in position 2552 of 23S rRNA at the 2'-O position of the ribose in the fully assembled 50S ribosomal subunit. This is Ribosomal RNA large subunit methyltransferase E from Methanosphaerula palustris (strain ATCC BAA-1556 / DSM 19958 / E1-9c).